Here is a 689-residue protein sequence, read N- to C-terminus: Glycine--tRNA ligase beta subunit (689 aa).

It belongs to the class-II aminoacyl-tRNA synthetase family. In terms of assembly, tetramer of two alpha and two beta subunits.

The protein localises to the cytoplasm. The enzyme catalyses tRNA(Gly) + glycine + ATP = glycyl-tRNA(Gly) + AMP + diphosphate. The sequence is that of Glycine--tRNA ligase beta subunit from Photorhabdus laumondii subsp. laumondii (strain DSM 15139 / CIP 105565 / TT01) (Photorhabdus luminescens subsp. laumondii).